Reading from the N-terminus, the 928-residue chain is Retinoblastoma-associated protein (928 aa).

Residues 1 to 42 form a disordered region; the sequence is MPPKTPRKTAATAAAAAAEPPAPPPPPPPEEDPEQDSGPEDL. P2 carries the n,N-dimethylproline modification. Residues 8–19 are compositionally biased toward low complexity; that stretch reads KTAATAAAAAAE. Positions 29 to 39 are enriched in acidic residues; that stretch reads PEEDPEQDSGP. S37 carries the phosphoserine modification. S249 carries the phosphoserine; by CDK1 modification. Residue T252 is modified to Phosphothreonine; by CDK1. T356 carries the post-translational modification Phosphothreonine. T373 carries the phosphothreonine; by CDK1 modification. Positions 373–579 are domain A; it reads TPVRTVMNTI…FDLIKQSKDR (207 aa). The segment at 373–771 is pocket; binds T and E1A; that stretch reads TPVRTVMNTI…QRLKTNILQY (399 aa). Residue S567 is modified to Phosphoserine; by CDK2. The interval 580-639 is spacer; that stretch reads EGPTDHLESACPLNLPLQNNHTAADMYLSPVRSPKKKGSTTRVNSTANAETQATSAFQTQ. S608 is subject to Phosphoserine. Positions 610–632 are disordered; the sequence is VRSPKKKGSTTRVNSTANAETQA. S612 is modified (phosphoserine; by CHEK2 and CHEK1). Residues 619 to 632 are compositionally biased toward polar residues; that stretch reads TTRVNSTANAETQA. S624 is subject to Phosphoserine. The interval 640–771 is domain B; the sequence is KPLKSTSLSL…QRLKTNILQY (132 aa). Residues 763-928 are interaction with LIMD1; sequence RLKTNILQYA…SMDTSNKEEK (166 aa). The interval 771 to 928 is domain C; mediates interaction with E4F1; it reads YASTRPPTLS…SMDTSNKEEK (158 aa). Residues S780, S788, and S795 each carry the phosphoserine modification. Residue S807 is modified to Phosphoserine; by CDK1 and CDK3. K810 carries the N6-methyllysine; by SMYD2 modification. A Phosphoserine; by CDK1 and CDK3 modification is found at S811. Position 821 is a phosphothreonine; by CDK6 (T821). A Phosphothreonine modification is found at T823. T826 is modified (phosphothreonine; by CDK4). T841 is subject to Phosphothreonine. At S855 the chain carries Phosphoserine. K860 is modified (N6-methyllysine; by SMYD2). A Bipartite nuclear localization signal motif is present at residues 860-876; that stretch reads KRSAEGSNPPKPLKKLR. Residues 860–928 are disordered; it reads KRSAEGSNPP…SMDTSNKEEK (69 aa). N6-acetyllysine; by PCAF is present on residues K873 and K874. A compositionally biased stretch (basic and acidic residues) spans 915 to 928; that stretch reads KMNDSMDTSNKEEK.

This sequence belongs to the retinoblastoma protein (RB) family. In terms of assembly, the hypophosphorylated form interacts with and sequesters the E2F1 transcription factor, thereby inhibiting E2F1 transcription. Interacts with heterodimeric E2F/DP transcription factor complexes containing TFDP1 and either E2F1, E2F3, E2F4 or E2F5, or TFDP2 and E2F4. Interacts (when hyperphosphorylated and hypophosphorylated) with PKP3; the interaction inhibits RB1 interaction with and repression of the transcription factor E2F1, potentially via sequestering RB1 to the cytoplasm. The unphosphorylated form interacts with EID1, ARID3B, KDM5A, SUV39H1, MJD2A/JHDM3A and THOC1. Interacts with the N-terminal domain of TAF1. Interacts with SNW1, ATAD5, AATF, DNMT1, LIN9, LMNA, KMT5B, KMT5C, PELP1, UHRF2 and TMPO-alpha. Interacts with GRIP1 and UBR4. Interacts with ARID4A and KDM5B. Interacts with E4F1 and LIMD1. Interacts with SMARCA4/BRG1 and HDAC1. Interacts with PSMA3 and USP4. Interacts (when methylated at Lys-860) with L3MBTL1. Interacts with CHEK2; phosphorylates RB1. Interacts with CDK1 and CDK2. Interacts with PRMT2. Interacts with CEBPA. P-TEFB complex interacts with RB1; promotes phosphorylation of RB1. Interacts with RBBP9; the interaction disrupts RB1 binding to E2F1. Interacts with KAT2B/PCAF and EP300/P300. Interacts with PAX5. Interacts (phosphorylated and unphosphorylated) with BLCAP. May interact with NDC80. (Microbial infection) Interacts with adenovirus E1A protein. As to quaternary structure, (Microbial infection) Interacts with HPV E7 protein. In terms of assembly, (Microbial infection) Interacts with SV40 large T antigen. (Microbial infection) Interacts with human cytomegalovirus/HHV-5 proteins UL82 and UL123. As to quaternary structure, (Microbial infection) Interacts with molluscum contagiosum virus protein MC007. In terms of processing, phosphorylated by CDK6 and CDK4, and subsequently by CDK2 at Ser-567 in G1, thereby releasing E2F1 which is then able to activate cell growth. Dephosphorylated at the late M phase. SV40 large T antigen, HPV E7 and adenovirus E1A bind to the underphosphorylated, active form of pRb. Phosphorylation at Thr-821 and Thr-826 promotes interaction between the C-terminal domain C and the Pocket domain, and thereby inhibits interactions with heterodimeric E2F/DP transcription factor complexes. Dephosphorylated at Ser-795 by calcineruin upon calcium stimulation. CDK3/cyclin-C-mediated phosphorylation at Ser-807 and Ser-811 is required for G0-G1 transition. Phosphorylated by CDK1 and CDK2 upon TGFB1-mediated apoptosis. Post-translationally, N-terminus is methylated by METTL11A/NTM1. Monomethylation at Lys-810 by SMYD2 enhances phosphorylation at Ser-807 and Ser-811, and promotes cell cycle progression. Monomethylation at Lys-860 by SMYD2 promotes interaction with L3MBTL1. Acetylated during keratinocyte differentiation. Acetylation at Lys-873 and Lys-874 regulates subcellular localization. Can be deacetylated by SIRT1. Expressed in the retina. Expressed in foreskin keratinocytes (at protein level).

It localises to the nucleus. It is found in the cytoplasm. Functionally, tumor suppressor that is a key regulator of the G1/S transition of the cell cycle. The hypophosphorylated form binds transcription regulators of the E2F family, preventing transcription of E2F-responsive genes. Both physically blocks E2Fs transactivating domain and recruits chromatin-modifying enzymes that actively repress transcription. Cyclin and CDK-dependent phosphorylation of RB1 induces its dissociation from E2Fs, thereby activating transcription of E2F responsive genes and triggering entry into S phase. RB1 also promotes the G0-G1 transition upon phosphorylation and activation by CDK3/cyclin-C. Directly involved in heterochromatin formation by maintaining overall chromatin structure and, in particular, that of constitutive heterochromatin by stabilizing histone methylation. Recruits and targets histone methyltransferases SUV39H1, KMT5B and KMT5C, leading to epigenetic transcriptional repression. Controls histone H4 'Lys-20' trimethylation. Inhibits the intrinsic kinase activity of TAF1. Mediates transcriptional repression by SMARCA4/BRG1 by recruiting a histone deacetylase (HDAC) complex to the c-FOS promoter. In resting neurons, transcription of the c-FOS promoter is inhibited by BRG1-dependent recruitment of a phospho-RB1-HDAC1 repressor complex. Upon calcium influx, RB1 is dephosphorylated by calcineurin, which leads to release of the repressor complex. (Microbial infection) In case of viral infections, interactions with SV40 large T antigen, HPV E7 protein or adenovirus E1A protein induce the disassembly of RB1-E2F1 complex thereby disrupting RB1's activity. The protein is Retinoblastoma-associated protein (RB1) of Homo sapiens (Human).